Reading from the N-terminus, the 676-residue chain is Ion-translocating oxidoreductase complex subunit C (676 aa).

2 4Fe-4S ferredoxin-type domains span residues 369 to 397 (GEPQ…QQLY) and 407 to 436 (KATT…VQYF). Cys-377, Cys-380, Cys-383, Cys-387, Cys-416, Cys-419, Cys-422, and Cys-426 together coordinate [4Fe-4S] cluster. The interval 600–652 (ARKLEQQQANAEPEQQVDPRKAAVEAAIARAKARKLEQQQANAEPEEQVDPRK) is disordered. Low complexity predominate over residues 605-615 (QQQANAEPEQQ).

This sequence belongs to the 4Fe4S bacterial-type ferredoxin family. RnfC subfamily. As to quaternary structure, the complex is composed of six subunits: RsxA, RsxB, RsxC, RsxD, RsxE and RsxG. The cofactor is [4Fe-4S] cluster.

It localises to the cell inner membrane. In terms of biological role, part of a membrane-bound complex that couples electron transfer with translocation of ions across the membrane. Required to maintain the reduced state of SoxR. The sequence is that of Ion-translocating oxidoreductase complex subunit C from Escherichia coli (strain SMS-3-5 / SECEC).